The chain runs to 644 residues: Exoribonuclease 2 (644 aa).

An RNB domain is found at 190 to 516 (REDLTALDFI…INHRLLKALI (327 aa)). The 83-residue stretch at 562–644 (DSRFAAEIID…ENRSVIARPV (83 aa)) folds into the S1 motif domain.

This sequence belongs to the RNR ribonuclease family. RNase II subfamily.

Its subcellular location is the cytoplasm. It catalyses the reaction Exonucleolytic cleavage in the 3'- to 5'-direction to yield nucleoside 5'-phosphates.. Functionally, involved in mRNA degradation. Hydrolyzes single-stranded polyribonucleotides processively in the 3' to 5' direction. The polypeptide is Exoribonuclease 2 (Sodalis glossinidius (strain morsitans)).